The following is a 682-amino-acid chain: Tail-specific protease (682 aa).

Positions 1–22 (MNMFFRLTALAGLLAIAGQTFA) are cleaved as a signal peptide. In terms of domain architecture, PDZ spans 238 to 322 (NTEMSLSLEG…SKVRLEILPA (85 aa)). Residues serine 452, aspartate 463, and lysine 477 each act as charge relay system in the active site. Residues 635 to 650 (GKPELKKLDDLPKDYQ) are compositionally biased toward basic and acidic residues. Residues 635–654 (GKPELKKLDDLPKDYQEPDP) are disordered.

The protein belongs to the peptidase S41A family.

The protein localises to the cell inner membrane. The catalysed reaction is The enzyme shows specific recognition of a C-terminal tripeptide, Xaa-Yaa-Zaa, in which Xaa is preferably Ala or Leu, Yaa is preferably Ala or Tyr, and Zaa is preferably Ala, but then cleaves at a variable distance from the C-terminus. A typical cleavage is -Ala-Ala-|-Arg-Ala-Ala-Lys-Glu-Asn-Tyr-Ala-Leu-Ala-Ala.. Functionally, involved in the cleavage of a C-terminal peptide of 11 residues from the precursor form of penicillin-binding protein 3 (PBP3). May be involved in protection of the bacterium from thermal and osmotic stresses. This chain is Tail-specific protease (prc), found in Escherichia coli (strain K12).